A 604-amino-acid chain; its full sequence is Phosphomethylpyrimidine synthase (604 aa).

Substrate is bound by residues N218, M247, Y276, H312, S332 to G334, D373 to R376, and E412. Residue H416 coordinates Zn(2+). Y439 lines the substrate pocket. H480 contributes to the Zn(2+) binding site. [4Fe-4S] cluster contacts are provided by C560, C563, and C568.

It belongs to the ThiC family. As to quaternary structure, homodimer. It depends on [4Fe-4S] cluster as a cofactor.

It catalyses the reaction 5-amino-1-(5-phospho-beta-D-ribosyl)imidazole + S-adenosyl-L-methionine = 4-amino-2-methyl-5-(phosphooxymethyl)pyrimidine + CO + 5'-deoxyadenosine + formate + L-methionine + 3 H(+). Its pathway is cofactor biosynthesis; thiamine diphosphate biosynthesis. Catalyzes the synthesis of the hydroxymethylpyrimidine phosphate (HMP-P) moiety of thiamine from aminoimidazole ribotide (AIR) in a radical S-adenosyl-L-methionine (SAM)-dependent reaction. The polypeptide is Phosphomethylpyrimidine synthase (Zymomonas mobilis subsp. mobilis (strain ATCC 31821 / ZM4 / CP4)).